Consider the following 233-residue polypeptide: 5'-methylthioadenosine/S-adenosylhomocysteine nucleosidase (233 aa).

Glu-12 serves as the catalytic Proton acceptor. Residues Gly-78, Ile-156, and 177 to 178 (ME) each bind substrate. Asp-201 serves as the catalytic Proton donor.

The protein belongs to the PNP/UDP phosphorylase family. MtnN subfamily.

The enzyme catalyses S-adenosyl-L-homocysteine + H2O = S-(5-deoxy-D-ribos-5-yl)-L-homocysteine + adenine. The catalysed reaction is S-methyl-5'-thioadenosine + H2O = 5-(methylsulfanyl)-D-ribose + adenine. It carries out the reaction 5'-deoxyadenosine + H2O = 5-deoxy-D-ribose + adenine. It participates in amino-acid biosynthesis; L-methionine biosynthesis via salvage pathway; S-methyl-5-thio-alpha-D-ribose 1-phosphate from S-methyl-5'-thioadenosine (hydrolase route): step 1/2. In terms of biological role, catalyzes the irreversible cleavage of the glycosidic bond in both 5'-methylthioadenosine (MTA) and S-adenosylhomocysteine (SAH/AdoHcy) to adenine and the corresponding thioribose, 5'-methylthioribose and S-ribosylhomocysteine, respectively. Also cleaves 5'-deoxyadenosine, a toxic by-product of radical S-adenosylmethionine (SAM) enzymes, into 5-deoxyribose and adenine. The protein is 5'-methylthioadenosine/S-adenosylhomocysteine nucleosidase of Listeria monocytogenes serotype 4b (strain CLIP80459).